A 362-amino-acid chain; its full sequence is Chorismate synthase (362 aa).

Residue R46 coordinates NADP(+). Residues 122–124 (RSS), 238–239 (NA), G278, 293–297 (KPTPS), and R319 contribute to the FMN site.

It belongs to the chorismate synthase family. In terms of assembly, homotetramer. The cofactor is FMNH2.

It catalyses the reaction 5-O-(1-carboxyvinyl)-3-phosphoshikimate = chorismate + phosphate. The protein operates within metabolic intermediate biosynthesis; chorismate biosynthesis; chorismate from D-erythrose 4-phosphate and phosphoenolpyruvate: step 7/7. Its function is as follows. Catalyzes the anti-1,4-elimination of the C-3 phosphate and the C-6 proR hydrogen from 5-enolpyruvylshikimate-3-phosphate (EPSP) to yield chorismate, which is the branch point compound that serves as the starting substrate for the three terminal pathways of aromatic amino acid biosynthesis. This reaction introduces a second double bond into the aromatic ring system. The protein is Chorismate synthase of Campylobacter jejuni (strain RM1221).